The primary structure comprises 216 residues: Large ribosomal subunit protein uL3 (216 aa).

The segment at 137-158 is disordered; that stretch reads GASHGAHKNHRKPGSIGGASTP.

Belongs to the universal ribosomal protein uL3 family. In terms of assembly, part of the 50S ribosomal subunit. Forms a cluster with proteins L14 and L19.

One of the primary rRNA binding proteins, it binds directly near the 3'-end of the 23S rRNA, where it nucleates assembly of the 50S subunit. This Pseudarthrobacter chlorophenolicus (strain ATCC 700700 / DSM 12829 / CIP 107037 / JCM 12360 / KCTC 9906 / NCIMB 13794 / A6) (Arthrobacter chlorophenolicus) protein is Large ribosomal subunit protein uL3.